The chain runs to 239 residues: Putative transcriptional regulator of 2-aminoethylphosphonate degradation operons (239 aa).

The HTH gntR-type domain occupies 8-76; sequence IPQYLLIKAQ…DRRGWFVTPE (69 aa). The segment at residues 36-55 is a DNA-binding region (H-T-H motif); it reads ERELCAIFNTTRITIRESLA.

The polypeptide is Putative transcriptional regulator of 2-aminoethylphosphonate degradation operons (phnR) (Salmonella typhi).